The following is a 157-amino-acid chain: SsrA-binding protein (157 aa).

The protein belongs to the SmpB family.

It localises to the cytoplasm. In terms of biological role, required for rescue of stalled ribosomes mediated by trans-translation. Binds to transfer-messenger RNA (tmRNA), required for stable association of tmRNA with ribosomes. tmRNA and SmpB together mimic tRNA shape, replacing the anticodon stem-loop with SmpB. tmRNA is encoded by the ssrA gene; the 2 termini fold to resemble tRNA(Ala) and it encodes a 'tag peptide', a short internal open reading frame. During trans-translation Ala-aminoacylated tmRNA acts like a tRNA, entering the A-site of stalled ribosomes, displacing the stalled mRNA. The ribosome then switches to translate the ORF on the tmRNA; the nascent peptide is terminated with the 'tag peptide' encoded by the tmRNA and targeted for degradation. The ribosome is freed to recommence translation, which seems to be the essential function of trans-translation. The chain is SsrA-binding protein from Clostridium kluyveri (strain NBRC 12016).